Here is a 151-residue protein sequence, read N- to C-terminus: Acidic phospholipase A2 4 (151 aa).

A signal peptide spans 1-27 (MYPAHLLVLLAVCVSLLGAASIPARPL). 7 disulfide bridges follow: Cys38-Cys104, Cys54-Cys151, Cys56-Cys72, Cys71-Cys132, Cys78-Cys125, Cys88-Cys118, and Cys111-Cys123. Residues Tyr55, Gly57, and Gly59 each coordinate Ca(2+). The active site involves His75. Ca(2+) is bound at residue Asp76. The active site involves Asp126.

Belongs to the phospholipase A2 family. Group I subfamily. D49 sub-subfamily. Requires Ca(2+) as cofactor. Expressed by the venom gland.

It is found in the secreted. The catalysed reaction is a 1,2-diacyl-sn-glycero-3-phosphocholine + H2O = a 1-acyl-sn-glycero-3-phosphocholine + a fatty acid + H(+). In terms of biological role, PLA2 catalyzes the calcium-dependent hydrolysis of the 2-acyl groups in 3-sn-phosphoglycerides. This is Acidic phospholipase A2 4 from Tropidechis carinatus (Australian rough-scaled snake).